The primary structure comprises 579 residues: Probable receptor-like serine/threonine-protein kinase At5g57670 (579 aa).

A Phosphothreonine modification is found at Thr-256. Positions 267–542 (FHQGNIVGIG…LLTNGNEAEI (276 aa)) constitute a Protein kinase domain. ATP contacts are provided by residues 273 to 281 (VGIGGYSEV) and Lys-295. Catalysis depends on Asp-392, which acts as the Proton acceptor. Ser-396 bears the Phosphoserine mark. At Thr-432 the chain carries Phosphothreonine.

This sequence belongs to the protein kinase superfamily. Ser/Thr protein kinase family.

It carries out the reaction L-seryl-[protein] + ATP = O-phospho-L-seryl-[protein] + ADP + H(+). The enzyme catalyses L-threonyl-[protein] + ATP = O-phospho-L-threonyl-[protein] + ADP + H(+). The polypeptide is Probable receptor-like serine/threonine-protein kinase At5g57670 (Arabidopsis thaliana (Mouse-ear cress)).